The primary structure comprises 227 residues: ATP-dependent dethiobiotin synthetase BioD (227 aa).

Residue 13–18 (DVGKTV) coordinates ATP. Thr-17 contributes to the Mg(2+) binding site. Lys-38 is a catalytic residue. Residues Asp-55, 116–119 (EGAG), 176–177 (NR), and 205–207 (PYI) each bind ATP. Positions 55 and 116 each coordinate Mg(2+).

It belongs to the dethiobiotin synthetase family. As to quaternary structure, homodimer. Mg(2+) serves as cofactor.

Its subcellular location is the cytoplasm. The catalysed reaction is (7R,8S)-7,8-diammoniononanoate + CO2 + ATP = (4R,5S)-dethiobiotin + ADP + phosphate + 3 H(+). It participates in cofactor biosynthesis; biotin biosynthesis; biotin from 7,8-diaminononanoate: step 1/2. In terms of biological role, catalyzes a mechanistically unusual reaction, the ATP-dependent insertion of CO2 between the N7 and N8 nitrogen atoms of 7,8-diaminopelargonic acid (DAPA, also called 7,8-diammoniononanoate) to form a ureido ring. In Vibrio vulnificus (strain CMCP6), this protein is ATP-dependent dethiobiotin synthetase BioD.